The following is a 303-amino-acid chain: uncharacterized protein (303 aa).

6 helical membrane passes run G12 to L32, I81 to F101, A117 to I137, C174 to S194, I208 to V228, and F265 to A286. Solcar repeat units lie at residues S17 to K105, D111 to F195, and S206 to I293.

This sequence belongs to the mitochondrial carrier (TC 2.A.29) family.

The protein localises to the mitochondrion inner membrane. This is an uncharacterized protein from Schizosaccharomyces pombe (strain 972 / ATCC 24843) (Fission yeast).